Here is a 91-residue protein sequence, read N- to C-terminus: DNA-directed RNA polymerase subunit omega (91 aa).

This sequence belongs to the RNA polymerase subunit omega family. In terms of assembly, the RNAP catalytic core consists of 2 alpha, 1 beta, 1 beta' and 1 omega subunit. When a sigma factor is associated with the core the holoenzyme is formed, which can initiate transcription.

The enzyme catalyses RNA(n) + a ribonucleoside 5'-triphosphate = RNA(n+1) + diphosphate. In terms of biological role, promotes RNA polymerase assembly. Latches the N- and C-terminal regions of the beta' subunit thereby facilitating its interaction with the beta and alpha subunits. This chain is DNA-directed RNA polymerase subunit omega, found in Enterobacter sp. (strain 638).